The primary structure comprises 367 residues: DNA replication and repair protein RecF (367 aa).

Residue 30–37 participates in ATP binding; that stretch reads GANGSGKT.

It belongs to the RecF family.

The protein localises to the cytoplasm. The RecF protein is involved in DNA metabolism; it is required for DNA replication and normal SOS inducibility. RecF binds preferentially to single-stranded, linear DNA. It also seems to bind ATP. This Pseudomonas fluorescens (strain SBW25) protein is DNA replication and repair protein RecF.